A 708-amino-acid polypeptide reads, in one-letter code: Ion-translocating oxidoreductase complex subunit C (708 aa).

4Fe-4S ferredoxin-type domains lie at 369–397 and 407–436; these read GEPQ…QQLY and KATT…VQYF. 8 residues coordinate [4Fe-4S] cluster: Cys377, Cys380, Cys383, Cys387, Cys416, Cys419, Cys422, and Cys426. Positions 599–686 are disordered; the sequence is KARKLEQQQS…EEQVDPRKAA (88 aa).

It belongs to the 4Fe4S bacterial-type ferredoxin family. RnfC subfamily. As to quaternary structure, the complex is composed of six subunits: RsxA, RsxB, RsxC, RsxD, RsxE and RsxG. Requires [4Fe-4S] cluster as cofactor.

The protein resides in the cell inner membrane. In terms of biological role, part of a membrane-bound complex that couples electron transfer with translocation of ions across the membrane. Required to maintain the reduced state of SoxR. This Escherichia coli (strain 55989 / EAEC) protein is Ion-translocating oxidoreductase complex subunit C.